The following is a 263-amino-acid chain: Endonuclease 8 (263 aa).

Catalysis depends on P2, which acts as the Schiff-base intermediate with DNA. E3 acts as the Proton donor in catalysis. Residue K53 is the Proton donor; for beta-elimination activity of the active site. Q70, R125, and N169 together coordinate DNA. An FPG-type zinc finger spans residues 229-263 (KVFHRDGEACERCGGIIEKTTLSSRPFYWCPHCQK). Catalysis depends on R253, which acts as the Proton donor; for delta-elimination activity.

This sequence belongs to the FPG family. Requires Zn(2+) as cofactor.

The enzyme catalyses 2'-deoxyribonucleotide-(2'-deoxyribose 5'-phosphate)-2'-deoxyribonucleotide-DNA = a 3'-end 2'-deoxyribonucleotide-(2,3-dehydro-2,3-deoxyribose 5'-phosphate)-DNA + a 5'-end 5'-phospho-2'-deoxyribonucleoside-DNA + H(+). Involved in base excision repair of DNA damaged by oxidation or by mutagenic agents. Acts as a DNA glycosylase that recognizes and removes damaged bases. Has a preference for oxidized pyrimidines, such as thymine glycol, 5,6-dihydrouracil and 5,6-dihydrothymine. Has AP (apurinic/apyrimidinic) lyase activity and introduces nicks in the DNA strand. Cleaves the DNA backbone by beta-delta elimination to generate a single-strand break at the site of the removed base with both 3'- and 5'-phosphates. This Salmonella arizonae (strain ATCC BAA-731 / CDC346-86 / RSK2980) protein is Endonuclease 8.